A 295-amino-acid chain; its full sequence is Nitrogenase iron protein (295 aa).

11 to 18 (GKGGIGKS) is a binding site for ATP. C99 is a [4Fe-4S] cluster binding site. At R102 the chain carries ADP-ribosylarginine; by dinitrogenase reductase ADP-ribosyltransferase. Residue C133 coordinates [4Fe-4S] cluster.

The protein belongs to the NifH/BchL/ChlL family. Homodimer. Requires [4Fe-4S] cluster as cofactor. The reversible ADP-ribosylation of Arg-102 inactivates the nitrogenase reductase and regulates nitrogenase activity.

It carries out the reaction N2 + 8 reduced [2Fe-2S]-[ferredoxin] + 16 ATP + 16 H2O = H2 + 8 oxidized [2Fe-2S]-[ferredoxin] + 2 NH4(+) + 16 ADP + 16 phosphate + 6 H(+). Its function is as follows. The key enzymatic reactions in nitrogen fixation are catalyzed by the nitrogenase complex, which has 2 components: the iron protein and the molybdenum-iron protein. The chain is Nitrogenase iron protein from Zymomonas mobilis subsp. mobilis (strain ATCC 31821 / ZM4 / CP4).